An 860-amino-acid chain; its full sequence is Putative mixed-linked glucan synthase 1 (860 aa).

2 helical membrane-spanning segments follow: residues 63 to 83 (ILHPYRFLILARLIAIVAFFA) and 93 to 113 (GAWLWTMSMVGDVWFGFSWVL). Aspartate 183 is a catalytic residue. A coiled-coil region spans residues 235–263 (ELMSDHRRVRREYEEFKVRIDSLSSTIRQ). Substrate is bound by residues aspartate 381 and aspartate 383. Aspartate 549 is a catalytic residue. 6 consecutive transmembrane segments (helical) span residues 625–645 (TYPIVTVFIFFYNLFPVMWLI), 655–675 (FGEYLLYLVAVIAMIHVIGMF), 693–713 (FYMIGSTGVYPTAVLYMALKL), 747–767 (LLIPTIVIMVVNVAAVGVAVG), 781–801 (LAVLGMVFNVWILVLLYPFAL), and 812–832 (AVLFVAMAMAVAAVAAMYVAF).

This sequence belongs to the glycosyltransferase 2 family. Plant cellulose synthase-like F subfamily.

The protein localises to the golgi apparatus membrane. Its function is as follows. May catalyze both beta-1,3 and beta-1,4 glycosidic linkage on beta-D-glucan. Essential for (1,3;1,4)-beta-D-glucans synthesis in grasses and cereals (Poaceae). The mixed-linked glucans (which are not present in walls of dicotyledons or most other monocotyledonous plants) are particularly important constituents of the walls of the starchy endosperm and aleurone cells of cereal grains such as oats, wheat, rice and barley. They can account for up to 70% by weight of the wall. This chain is Putative mixed-linked glucan synthase 1 (CSFL1), found in Oryza sativa subsp. japonica (Rice).